We begin with the raw amino-acid sequence, 88 residues long: Mini zinc finger protein 3 (88 aa).

The ZF-HD dimerization-type; degenerate zinc finger occupies tyrosine 26 to glutamate 72.

As to quaternary structure, homo- and heterodimers. Interacts with ZHD3, ZHD5, ZHD6, ZHD7, ZHD8, ZHD9, ZHD10 and ZHD13. As to expression, mostly expressed in roots, stems and flowers, present in seedlings and leaves, and weakly observed in inflorescence and siliques.

The protein resides in the cytoplasm. Functionally, inhibits zinc finger homeodomain (ZHD) transcription factors by interacting with them to prevent both their nuclear localization and their DNA-binding properties. Involved in integrating signals from multiple hormones by regulating the expression of specific genes. Promotes the formation of ectopic shoot meristems on leaf margins. This is Mini zinc finger protein 3 (MIF3) from Arabidopsis thaliana (Mouse-ear cress).